The chain runs to 324 residues: Phospho-N-acetylmuramoyl-pentapeptide-transferase (324 aa).

10 helical membrane-spanning segments follow: residues Val-5–Ile-25, Gly-50–Met-70, Leu-77–Leu-97, Leu-117–Ser-137, Leu-147–Ser-167, Leu-176–Trp-196, Ile-203–His-223, Val-227–Leu-247, Leu-250–Ile-270, and Val-304–Ile-324.

Belongs to the glycosyltransferase 4 family. MraY subfamily. Requires Mg(2+) as cofactor.

The protein resides in the cell membrane. It carries out the reaction UDP-N-acetyl-alpha-D-muramoyl-L-alanyl-gamma-D-glutamyl-meso-2,6-diaminopimeloyl-D-alanyl-D-alanine + di-trans,octa-cis-undecaprenyl phosphate = di-trans,octa-cis-undecaprenyl diphospho-N-acetyl-alpha-D-muramoyl-L-alanyl-D-glutamyl-meso-2,6-diaminopimeloyl-D-alanyl-D-alanine + UMP. It functions in the pathway cell wall biogenesis; peptidoglycan biosynthesis. Its function is as follows. Catalyzes the initial step of the lipid cycle reactions in the biosynthesis of the cell wall peptidoglycan: transfers peptidoglycan precursor phospho-MurNAc-pentapeptide from UDP-MurNAc-pentapeptide onto the lipid carrier undecaprenyl phosphate, yielding undecaprenyl-pyrophosphoryl-MurNAc-pentapeptide, known as lipid I. The protein is Phospho-N-acetylmuramoyl-pentapeptide-transferase of Geobacillus sp. (strain WCH70).